Consider the following 1358-residue polypeptide: Insulin-like growth factor 1 receptor (1358 aa).

Residues 1-25 (MKAELVPVCTAWILGLLLCLGPAAA) form the signal peptide. Cysteine 28 and cysteine 47 are oxidised to a cystine. N-linked (GlcNAc...) asparagine glycosylation is found at asparagine 74, asparagine 99, and asparagine 132. Intrachain disulfides connect cysteine 147–cysteine 175, cysteine 179–cysteine 202, cysteine 189–cysteine 208, cysteine 212–cysteine 221, cysteine 216–cysteine 227, cysteine 228–cysteine 236, cysteine 232–cysteine 245, cysteine 248–cysteine 257, cysteine 261–cysteine 273, cysteine 279–cysteine 299, cysteine 303–cysteine 317, cysteine 320–cysteine 324, and cysteine 328–cysteine 347. N-linked (GlcNAc...) asparagine glycosylation is present at asparagine 241. N-linked (GlcNAc...) asparagine glycosylation is present at asparagine 310. 2 N-linked (GlcNAc...) asparagine glycosylation sites follow: asparagine 411 and asparagine 432. Cysteine 449 and cysteine 482 are joined by a disulfide. Fibronectin type-III domains follow at residues 483 to 603 (ESHV…TDAA), 604 to 702 (VPSI…TEAE), 727 to 818 (PRPN…FVFA), and 829 to 924 (IPGI…LKPD). 5 N-linked (GlcNAc...) asparagine glycosylation sites follow: asparagine 488, asparagine 528, asparagine 616, asparagine 634, and asparagine 669. The tract at residues 670 to 691 (GTIDTEGGTEPTKPEGSVGEKG) is disordered. Residues 735–934 (DVLAVGNSTV…VRNNILQMVV (200 aa)) are Extracellular-facing. N-linked (GlcNAc...) asparagine glycans are attached at residues asparagine 741, asparagine 750, asparagine 758, asparagine 895, and asparagine 908. The chain crosses the membrane as a helical span at residues 935–955 (AIPLALSFLLVGIISIVCFVF). Residues 956 to 1358 (KKRNSNRLGN…ALPLPQSSAC (403 aa)) lie on the Cytoplasmic side of the membrane. Residue tyrosine 976 is modified to Phosphotyrosine; by autocatalysis. One can recognise a Protein kinase domain in the interval 995–1270 (ITMNRELGQG…SIKDELDPGF (276 aa)). ATP is bound by residues 1001 to 1009 (LGQGSFGMV) and lysine 1029. Aspartate 1131 functions as the Proton acceptor in the catalytic mechanism. Phosphotyrosine; by autocatalysis occurs at positions 1157, 1161, and 1162. Positions 1336–1358 (PYAHMNGGRKNERALPLPQSSAC) are disordered.

It belongs to the protein kinase superfamily. Tyr protein kinase family. Insulin receptor subfamily. As to quaternary structure, tetramer of 2 alpha and 2 beta chains linked by disulfide bonds. The alpha chains contribute to the formation of the ligand-binding domain, while the beta chain carries the kinase domain. Mn(2+) serves as cofactor. In terms of processing, the cytoplasmic domain of the beta subunit is autophosphorylated on Tyr residues in response to low concentrations of insulin-like growth factor (IGF1) and higher concentrations of insulin.

Its subcellular location is the cell membrane. It carries out the reaction L-tyrosyl-[protein] + ATP = O-phospho-L-tyrosyl-[protein] + ADP + H(+). Its activity is regulated as follows. Autophosphorylation activates the kinase activity. Functionally, this receptor binds insulin-like growth factor 1 (IGF1) with a high affinity and IGF2 with a lower affinity. It has a tyrosine-protein kinase activity, which is necessary for the activation of the IGF1-stimulated downstream signaling cascade. Plays a role in oocyte maturation. Promotes head development by inhibiting Wnt signaling during embryogenesis. The protein is Insulin-like growth factor 1 receptor (igf1r) of Xenopus laevis (African clawed frog).